Here is a 135-residue protein sequence, read N- to C-terminus: Translation initiation factor 2 subunit beta (135 aa).

The protein belongs to the eIF-2-beta/eIF-5 family. Heterotrimer composed of an alpha, a beta and a gamma chain.

In terms of biological role, eIF-2 functions in the early steps of protein synthesis by forming a ternary complex with GTP and initiator tRNA. This is Translation initiation factor 2 subunit beta (eif2b) from Methanothermobacter thermautotrophicus (strain ATCC 29096 / DSM 1053 / JCM 10044 / NBRC 100330 / Delta H) (Methanobacterium thermoautotrophicum).